The following is a 325-amino-acid chain: Ribosomal RNA small subunit methyltransferase H (325 aa).

S-adenosyl-L-methionine is bound by residues 42 to 44, Asp-62, Phe-86, Asp-105, and Gln-112; that span reads GGH.

It belongs to the methyltransferase superfamily. RsmH family.

Its subcellular location is the cytoplasm. The enzyme catalyses cytidine(1402) in 16S rRNA + S-adenosyl-L-methionine = N(4)-methylcytidine(1402) in 16S rRNA + S-adenosyl-L-homocysteine + H(+). In terms of biological role, specifically methylates the N4 position of cytidine in position 1402 (C1402) of 16S rRNA. The sequence is that of Ribosomal RNA small subunit methyltransferase H from Cupriavidus metallidurans (strain ATCC 43123 / DSM 2839 / NBRC 102507 / CH34) (Ralstonia metallidurans).